The primary structure comprises 388 residues: GTPase Obg (388 aa).

Positions 1-159 (MKFIDEASIR…RSLRLELLLL (159 aa)) constitute an Obg domain. An OBG-type G domain is found at 160-333 (ADVGLLGMPN…LSLKLLDYIA (174 aa)). GTP contacts are provided by residues 166–173 (GMPNAGKS), 191–195 (FTTLV), 213–216 (DIPG), 283–286 (NKTD), and 314–316 (SAF). Mg(2+) contacts are provided by serine 173 and threonine 193.

It belongs to the TRAFAC class OBG-HflX-like GTPase superfamily. OBG GTPase family. Monomer. Mg(2+) is required as a cofactor.

The protein resides in the cytoplasm. In terms of biological role, an essential GTPase which binds GTP, GDP and possibly (p)ppGpp with moderate affinity, with high nucleotide exchange rates and a fairly low GTP hydrolysis rate. Plays a role in control of the cell cycle, stress response, ribosome biogenesis and in those bacteria that undergo differentiation, in morphogenesis control. The sequence is that of GTPase Obg from Shewanella denitrificans (strain OS217 / ATCC BAA-1090 / DSM 15013).